The chain runs to 140 residues: uncharacterized protein (140 aa).

3 consecutive transmembrane segments (helical) span residues 20–42 (ILYY…YVSG), 88–110 (FVAL…PVLL), and 115–137 (IIYT…GLLQ).

Its subcellular location is the cell membrane. This is an uncharacterized protein from Archaeoglobus fulgidus (strain ATCC 49558 / DSM 4304 / JCM 9628 / NBRC 100126 / VC-16).